The chain runs to 74 residues: MTSFGYRGKRVSPIPPKDKIDYKEVDLLRKFITERGKILPRRITGLTAKQQRDLTVAIKRARLLALLPFVNQEG.

The protein belongs to the bacterial ribosomal protein bS18 family. Part of the 30S ribosomal subunit. Forms a tight heterodimer with protein bS6.

Binds as a heterodimer with protein bS6 to the central domain of the 16S rRNA, where it helps stabilize the platform of the 30S subunit. This Gloeobacter violaceus (strain ATCC 29082 / PCC 7421) protein is Small ribosomal subunit protein bS18.